Consider the following 389-residue polypeptide: MNFHEYQSKQLLAEYGIPVPAGKVAATPDEAVEVANSLGNGPWMVKAQIHAGGRGKAGGVKFCKTTDDVKAAAAKMLGTKMSTYQTAGVELPINLVLVTTAGEIVKELYLSILVDRGTKTITYIASSEGGVEIEQVAAETPELIHALNVDFVEGVQGYHGRDFGFKLGLNAKQAGQFASIMVNLYRLFNEKDLALVEINPLAILDDGNLYALDGKFDSDDNAAFRQKQLVAMRDKTQEDETEVTASELDINYVTMDGNIGCMVNGAGLAMATMDVIKLNGGEPANFLDVGGGANKQRVIEAFKLILSSDKVEGIFVNIFGGIVRCDMIAEGIIAAVKEVGVKVPVVVRLEGTNVEEGKQLLRDSGMAIIPADNINDGAKKVVEAVKNAA.

The 236-residue stretch at lysine 9–threonine 244 folds into the ATP-grasp domain. Residues lysine 46, glycine 53–glycine 55, glycine 102, and glutamate 107 contribute to the ATP site. Mg(2+) contacts are provided by asparagine 199 and aspartate 213. Residues asparagine 264 and glycine 321–valine 323 each bind substrate.

It belongs to the succinate/malate CoA ligase beta subunit family. As to quaternary structure, heterotetramer of two alpha and two beta subunits. Mg(2+) serves as cofactor.

The catalysed reaction is succinate + ATP + CoA = succinyl-CoA + ADP + phosphate. The enzyme catalyses GTP + succinate + CoA = succinyl-CoA + GDP + phosphate. It functions in the pathway carbohydrate metabolism; tricarboxylic acid cycle; succinate from succinyl-CoA (ligase route): step 1/1. Its function is as follows. Succinyl-CoA synthetase functions in the citric acid cycle (TCA), coupling the hydrolysis of succinyl-CoA to the synthesis of either ATP or GTP and thus represents the only step of substrate-level phosphorylation in the TCA. The beta subunit provides nucleotide specificity of the enzyme and binds the substrate succinate, while the binding sites for coenzyme A and phosphate are found in the alpha subunit. This is Succinate--CoA ligase [ADP-forming] subunit beta from Xanthomonas euvesicatoria pv. vesicatoria (strain 85-10) (Xanthomonas campestris pv. vesicatoria).